A 282-amino-acid polypeptide reads, in one-letter code: Phosphatidylglycerol--prolipoprotein diacylglyceryl transferase (282 aa).

Transmembrane regions (helical) follow at residues 19–39, 58–78, and 104–124; these read IGPF…VFGW, ISLV…ILGG, and GGMS…WFAY. Residue R149 coordinates a 1,2-diacyl-sn-glycero-3-phospho-(1'-sn-glycerol). The next 3 helical transmembrane spans lie at 190 to 210, 214 to 234, and 250 to 270; these read AGME…LGAL, GMIL…GEHF, and MGML…VLAI.

This sequence belongs to the Lgt family.

It localises to the cell inner membrane. The catalysed reaction is L-cysteinyl-[prolipoprotein] + a 1,2-diacyl-sn-glycero-3-phospho-(1'-sn-glycerol) = an S-1,2-diacyl-sn-glyceryl-L-cysteinyl-[prolipoprotein] + sn-glycerol 1-phosphate + H(+). The protein operates within protein modification; lipoprotein biosynthesis (diacylglyceryl transfer). Catalyzes the transfer of the diacylglyceryl group from phosphatidylglycerol to the sulfhydryl group of the N-terminal cysteine of a prolipoprotein, the first step in the formation of mature lipoproteins. In Bradyrhizobium diazoefficiens (strain JCM 10833 / BCRC 13528 / IAM 13628 / NBRC 14792 / USDA 110), this protein is Phosphatidylglycerol--prolipoprotein diacylglyceryl transferase.